We begin with the raw amino-acid sequence, 409 residues long: PPE family protein PPE32 (409 aa).

Belongs to the mycobacterial PPE family. Interacts with host Toll-like receptor 2 (TLR2).

It is found in the secreted. The protein resides in the cell wall. Its subcellular location is the cell surface. Functionally, virulence factor that modulates the production of host cytokines. The polypeptide is PPE family protein PPE32 (Mycobacterium tuberculosis (strain CDC 1551 / Oshkosh)).